The following is a 175-amino-acid chain: Ribosome maturation factor RimM (175 aa).

The PRC barrel domain maps to 100–173 (EGEYYFHEII…IIIIRPMEGL (74 aa)).

It belongs to the RimM family. As to quaternary structure, binds ribosomal protein uS19.

Its subcellular location is the cytoplasm. Functionally, an accessory protein needed during the final step in the assembly of 30S ribosomal subunit, possibly for assembly of the head region. Essential for efficient processing of 16S rRNA. May be needed both before and after RbfA during the maturation of 16S rRNA. It has affinity for free ribosomal 30S subunits but not for 70S ribosomes. The sequence is that of Ribosome maturation factor RimM from Geobacillus thermodenitrificans (strain NG80-2).